The sequence spans 248 residues: uncharacterized protein (248 aa).

Residues 104-122 (CDVAACVGATWIAGGFAGA) form a helical membrane-spanning segment.

It localises to the membrane. This is an uncharacterized protein from Escherichia coli (strain K12).